The chain runs to 92 residues: Co-chaperonin GroES (92 aa).

Belongs to the GroES chaperonin family. Heptamer of 7 subunits arranged in a ring. Interacts with the chaperonin GroEL.

It is found in the cytoplasm. Functionally, together with the chaperonin GroEL, plays an essential role in assisting protein folding. The GroEL-GroES system forms a nano-cage that allows encapsulation of the non-native substrate proteins and provides a physical environment optimized to promote and accelerate protein folding. GroES binds to the apical surface of the GroEL ring, thereby capping the opening of the GroEL channel. The protein is Co-chaperonin GroES of Thermotoga petrophila (strain ATCC BAA-488 / DSM 13995 / JCM 10881 / RKU-1).